A 376-amino-acid polypeptide reads, in one-letter code: Protein RecA (376 aa).

Gly-66 to Thr-73 contacts ATP. A disordered region spans residues Val-329 to Ser-376. A compositionally biased stretch (low complexity) spans Ala-338–Ser-376.

It belongs to the RecA family.

It localises to the cytoplasm. Can catalyze the hydrolysis of ATP in the presence of single-stranded DNA, the ATP-dependent uptake of single-stranded DNA by duplex DNA, and the ATP-dependent hybridization of homologous single-stranded DNAs. It interacts with LexA causing its activation and leading to its autocatalytic cleavage. This is Protein RecA from Streptomyces rimosus.